We begin with the raw amino-acid sequence, 419 residues long: Putative zinc metalloprotease M6_Spy1682 (419 aa).

Histidine 18 provides a ligand contact to Zn(2+). Residue glutamate 19 is part of the active site. Zn(2+) is bound at residue histidine 22. 4 consecutive transmembrane segments (helical) span residues 169 to 191 (LITN…ILLV), 301 to 323 (LAWS…FSLN), 343 to 365 (LESV…LIPI), and 392 to 411 (AYIT…AVTW). The PDZ domain occupies 175–274 (GPMNNFILGI…LKTVAVKPQK (100 aa)).

Belongs to the peptidase M50B family. The cofactor is Zn(2+).

Its subcellular location is the cell membrane. The protein is Putative zinc metalloprotease M6_Spy1682 of Streptococcus pyogenes serotype M6 (strain ATCC BAA-946 / MGAS10394).